A 107-amino-acid polypeptide reads, in one-letter code: Cytochrome c-550 (107 aa).

Heme c contacts are provided by cysteine 11, cysteine 14, histidine 15, and methionine 80.

In terms of processing, binds 1 heme c group covalently per subunit.

The polypeptide is Cytochrome c-550 (Ancylobacter novellus (Thiobacillus novellus)).